Reading from the N-terminus, the 208-residue chain is Kininogen-1b (208 aa).

Residues 1 to 23 form the signal peptide; it reads MRLWFCLSFFIVLCLEHFPETLA. Positions 27–44 are enriched in basic and acidic residues; the sequence is NVPESEEKTEQYLRDLPK. The disordered stretch occupies residues 27–208; the sequence is NVPESEEKTE…RGKFHSQSHV (182 aa).

It belongs to the bradykinin-related peptide family. As to expression, expressed by the skin glands.

The protein localises to the secreted. In terms of biological role, in vitro, produces constriction of guinea pig ileum smooth muscle. May target bradykinin receptors (BDKRB). The protein is Kininogen-1b of Bombina maxima (Giant fire-bellied toad).